The sequence spans 512 residues: MTIKRALISVSDKTNLVPFVKELTELGVEVISTGGTKKLLQENGVDVIGISEVTGFPEIMDGRLKTLHPNIHGGLLAVRGNEEHMAQINEHGIQPIDLVVVNLYPFKETISKEDVTYEEAIENIDIGGPGMLRAASKNHQDVTVIVDPADYSPVLNQIKEEGSVSLQKKRELAAKVFRHTAAYDALIADYLTNVVGEKEPEQFTVTFEKKQSLRYGENPHQEATFYQTALPVKGSIAQAEQLHGKELSYNNIKDADAAVQIVREFTEPAAVAVKHMNPCGVGTGKTIAEAFDRAFEADKTSIFGGIIALNREVDKATAEALHNIFLEIIIAPSFSQEALDVLTAKKNLRLLTLDVSAAVQKEKQLTSVQGGLLIQDLDMHGFDDAEISIPTKREPNEQEWEDLKLAWKVVKHVKSNAIVLAKDNMTVGVGAGQMNRVGSAKIAIEQAGEKAKGSALGSDAYFPMPDTVEEAAKAGVTAIIQPGGSIRDEDSIKKADEYGIAMVFTGIRHFKH.

One can recognise an MGS-like domain in the interval 1-146 (MTIKRALISV…KNHQDVTVIV (146 aa)).

This sequence belongs to the PurH family.

The enzyme catalyses (6R)-10-formyltetrahydrofolate + 5-amino-1-(5-phospho-beta-D-ribosyl)imidazole-4-carboxamide = 5-formamido-1-(5-phospho-D-ribosyl)imidazole-4-carboxamide + (6S)-5,6,7,8-tetrahydrofolate. It carries out the reaction IMP + H2O = 5-formamido-1-(5-phospho-D-ribosyl)imidazole-4-carboxamide. The protein operates within purine metabolism; IMP biosynthesis via de novo pathway; 5-formamido-1-(5-phospho-D-ribosyl)imidazole-4-carboxamide from 5-amino-1-(5-phospho-D-ribosyl)imidazole-4-carboxamide (10-formyl THF route): step 1/1. It participates in purine metabolism; IMP biosynthesis via de novo pathway; IMP from 5-formamido-1-(5-phospho-D-ribosyl)imidazole-4-carboxamide: step 1/1. The chain is Bifunctional purine biosynthesis protein PurH from Bacillus subtilis (strain 168).